The primary structure comprises 109 residues: Putative RNase MJ1380 (109 aa).

Residues Arg-76 and His-81 contribute to the active site. The short motif at 76–83 is the RX(4)HXY motif element; it reads RNILIHKY. At Tyr-83 the chain carries O-di-AMP-tyrosine.

It belongs to the HepT RNase toxin family. Homodimer, probably forms a complex with cognate antitoxin MJ1379. Modified by cognate antitoxin MJ1379; probably at least 2 successive AMPylation events occur on Tyr-83.

Its function is as follows. Probable toxic component of a putative type VII toxin-antitoxin (TA) system, probably an RNase. Probably neutralized by cognate antitoxin MJ1379. Neutralization may be due to AMPylation by antitoxin MJ1379. This is Putative RNase MJ1380 from Methanocaldococcus jannaschii (strain ATCC 43067 / DSM 2661 / JAL-1 / JCM 10045 / NBRC 100440) (Methanococcus jannaschii).